The following is a 323-amino-acid chain: Aldo-keto reductase family 1 member C1 (323 aa).

NADP(+)-binding positions include 20-24 and D50; that span reads GFGTY. Residue Y24 participates in substrate binding. Residue Y55 is the Proton donor of the active site. H117 is a substrate binding site. NADP(+) contacts are provided by residues 166 to 167, Q190, and 216 to 222; these read SN and YSALGSH. Substrate is bound by residues H222 and W227. 270–280 lines the NADP(+) pocket; the sequence is KSYNEQRIRQN.

It belongs to the aldo/keto reductase family. Monomer.

The protein resides in the cytoplasm. It is found in the cytosol. The enzyme catalyses a 3alpha-hydroxysteroid + NADP(+) = a 3-oxosteroid + NADPH + H(+). The catalysed reaction is a 3alpha-hydroxysteroid + NAD(+) = a 3-oxosteroid + NADH + H(+). It carries out the reaction (17R,20S)-17,20-dihydroxypregn-4-en-3-one + NADP(+) = 17alpha-hydroxyprogesterone + NADPH + H(+). It catalyses the reaction (17R,20S)-17,20-dihydroxypregn-4-en-3-one + NAD(+) = 17alpha-hydroxyprogesterone + NADH + H(+). The enzyme catalyses (20S)-hydroxypregn-4-en-3-one + NADP(+) = progesterone + NADPH + H(+). The catalysed reaction is (20S)-hydroxypregn-4-en-3-one + NAD(+) = progesterone + NADH + H(+). It carries out the reaction (1R,2R)-1,2-dihydrobenzene-1,2-diol + NADP(+) = catechol + NADPH + H(+). It catalyses the reaction (S)-indan-1-ol + NAD(+) = indan-1-one + NADH + H(+). The enzyme catalyses (S)-indan-1-ol + NADP(+) = indan-1-one + NADPH + H(+). The catalysed reaction is 5alpha-androstane-3alpha,17beta-diol + NADP(+) = 17beta-hydroxy-5alpha-androstan-3-one + NADPH + H(+). It carries out the reaction 5alpha-androstane-3beta,17beta-diol + NADP(+) = 17beta-hydroxy-5alpha-androstan-3-one + NADPH + H(+). It catalyses the reaction 5alpha-androstane-3alpha,17beta-diol + NAD(+) = 17beta-hydroxy-5alpha-androstan-3-one + NADH + H(+). The enzyme catalyses 17beta-hydroxy-5alpha-androstan-3-one + NADP(+) = 5alpha-androstan-3,17-dione + NADPH + H(+). The catalysed reaction is androsterone + NADP(+) = 5alpha-androstan-3,17-dione + NADPH + H(+). It carries out the reaction androsterone + NADPH + H(+) = 5alpha-androstane-3alpha,17beta-diol + NADP(+). It catalyses the reaction 5alpha-androstane-3alpha,17beta-diol + NAD(+) = androsterone + NADH + H(+). The enzyme catalyses 17beta-estradiol + NADP(+) = estrone + NADPH + H(+). The catalysed reaction is 17beta-estradiol + NAD(+) = estrone + NADH + H(+). It carries out the reaction testosterone + NADP(+) = androst-4-ene-3,17-dione + NADPH + H(+). It catalyses the reaction 20alpha-hydroxy-5beta-pregnan-3-one + NADP(+) = 5beta-pregnan-3,20-dione + NADPH + H(+). The enzyme catalyses 3beta-hydroxy-5beta-pregnane-20-one + NADP(+) = 5beta-pregnan-3,20-dione + NADPH + H(+). The catalysed reaction is 3beta-hydroxy-5beta-pregnane-20-one + NADPH + H(+) = 3beta,20alpha-dihydroxy-5beta-pregnane + NADP(+). It carries out the reaction (3beta,5alpha,17beta)-3-hydroxyandrostan-17-yl sulfate + NADP(+) = 5alpha-dihydrotestosterone sulfate + NADPH + H(+). The protein operates within steroid metabolism. In terms of biological role, cytosolic aldo-keto reductase that catalyzes the NADH and NADPH-dependent reduction of ketosteroids to hydroxysteroids. Most probably acts as a reductase in vivo since the oxidase activity measured in vitro is inhibited by physiological concentrations of NADPH. Displays a broad positional specificity acting on positions 3, 17 and 20 of steroids and regulates the metabolism of hormones like estrogens and androgens. May also reduce conjugated steroids such as 5alpha-dihydrotestosterone sulfate. Displays affinity for bile acids. This chain is Aldo-keto reductase family 1 member C1 (AKR1C1), found in Pongo abelii (Sumatran orangutan).